The sequence spans 163 residues: Putative 4-hydroxy-4-methyl-2-oxoglutarate aldolase (163 aa).

Residues 76-79 (GDMI) and R98 each bind substrate. D99 contributes to the a divalent metal cation binding site.

This sequence belongs to the class II aldolase/RraA-like family. Homotrimer. The cofactor is a divalent metal cation.

The enzyme catalyses 4-hydroxy-4-methyl-2-oxoglutarate = 2 pyruvate. It catalyses the reaction oxaloacetate + H(+) = pyruvate + CO2. Its function is as follows. Catalyzes the aldol cleavage of 4-hydroxy-4-methyl-2-oxoglutarate (HMG) into 2 molecules of pyruvate. Also contains a secondary oxaloacetate (OAA) decarboxylase activity due to the common pyruvate enolate transition state formed following C-C bond cleavage in the retro-aldol and decarboxylation reactions. In Pseudomonas fluorescens, this protein is Putative 4-hydroxy-4-methyl-2-oxoglutarate aldolase.